The primary structure comprises 403 residues: Shaggy-related protein kinase GSK4 (403 aa).

Residues 71–355 (YMAERVVGTG…ALEACAHSFF (285 aa)) form the Protein kinase domain. ATP contacts are provided by residues 77–85 (VGTGSFGVV) and Lys-100. Catalysis depends on Asp-196, which acts as the Proton acceptor.

This sequence belongs to the protein kinase superfamily. CMGC Ser/Thr protein kinase family. GSK-3 subfamily. Interacts with LIC.

The catalysed reaction is L-seryl-[protein] + ATP = O-phospho-L-seryl-[protein] + ADP + H(+). The enzyme catalyses L-threonyl-[protein] + ATP = O-phospho-L-threonyl-[protein] + ADP + H(+). In terms of biological role, probable serine-threonine kinase that may regulate brassinosteroid signaling. The polypeptide is Shaggy-related protein kinase GSK4 (Oryza sativa subsp. japonica (Rice)).